Consider the following 90-residue polypeptide: Small ribosomal subunit protein bS20 (90 aa).

Residues 1–11 (MANIKSSEKDI) show a composition bias toward basic and acidic residues. A disordered region spans residues 1–29 (MANIKSSEKDIRRTKRRNAANSQNRSRLR).

The protein belongs to the bacterial ribosomal protein bS20 family.

Binds directly to 16S ribosomal RNA. This Leptospira borgpetersenii serovar Hardjo-bovis (strain JB197) protein is Small ribosomal subunit protein bS20.